Reading from the N-terminus, the 201-residue chain is Ras-related protein Rab-9A (201 aa).

At Ala2 the chain carries N-acetylalanine. Gly17, Val18, Gly19, Lys20, Ser21, Ser22, Ser34, His38, and Thr39 together coordinate GTP. Ser21 lines the Mg(2+) pocket. The Switch 1 motif lies at 31–42; sequence KFDSQLFHTIGV. Ser34 is modified (phosphoserine). Positions 39 and 62 each coordinate Mg(2+). Residues 64–78 carry the Switch 2 motif; sequence AGQERFRSLRTPFYR. GTP is bound by residues Gly65, Asn124, Lys125, Asp127, and Lys156. A Phosphoserine modification is found at Ser179. Thr187 carries the post-translational modification Phosphothreonine. 2 S-geranylgeranyl cysteine lipidation sites follow: Cys200 and Cys201.

It belongs to the small GTPase superfamily. Rab family. Interacts (preferentially in its GTP-bound form) with GCC2 (via its GRIP domain). Interacts (GTP-bound form) with SGSM1; the GDP-bound form has much lower affinity for SGSM1. Interacts with SGSM2. The GTP-bound form but not the GDP-bound form interacts with HPS4 and the BLOC-3 complex (heterodimer of HPS1 and HPS4) but does not interact with HPS1 alone. Interacts (GTP-bound form) with NDE1; two RAB9A-GTP molecules lie on the opposite sides of the NDE1 homodimer; the interaction leads to RAB9A-dynein motor tethering. Interacts (GTP-bound form) with NDEL1. The cofactor is Mg(2+).

Its subcellular location is the cell membrane. It is found in the endoplasmic reticulum membrane. The protein localises to the golgi apparatus membrane. It localises to the late endosome. The protein resides in the cytoplasmic vesicle. Its subcellular location is the phagosome membrane. It is found in the phagosome. The protein localises to the cytoplasmic vesicle membrane. It localises to the melanosome. The enzyme catalyses GTP + H2O = GDP + phosphate + H(+). Its activity is regulated as follows. Regulated by guanine nucleotide exchange factors (GEFs) which promote the exchange of bound GDP for free GTP. Regulated by GTPase activating proteins (GAPs) which increase the GTP hydrolysis activity. Inhibited by GDP dissociation inhibitors (GDIs). Functionally, the small GTPases Rab are key regulators of intracellular membrane trafficking, from the formation of transport vesicles to their fusion with membranes. Rabs cycle between an inactive GDP-bound form and an active GTP-bound form that is able to recruit to membranes different sets of downstream effectors directly responsible for vesicle formation, movement, tethering and fusion. RAB9A is involved in the transport of proteins between the endosomes and the trans-Golgi network (TGN). Specifically uses NDE1/NDEL1 as an effector to interact with the dynein motor complex in order to control retrograde trafficking of RAB9-associated late endosomes to the TGN. Involved in the recruitment of SGSM2 to melanosomes and is required for the proper trafficking of melanogenic enzymes TYR, TYRP1 and DCT/TYRP2 to melanosomes in melanocytes. The sequence is that of Ras-related protein Rab-9A from Rattus norvegicus (Rat).